The following is a 495-amino-acid chain: UDP-glycosyltransferase 73E1 (495 aa).

UDP-alpha-D-glucose-binding positions include Ser-299, Trp-355–Ala-356, His-373–Glu-381, and Phe-395–Gln-398.

It belongs to the UDP-glycosyltransferase family.

Its function is as follows. May glycosylate diterpenes or flavonols in leaves. This is UDP-glycosyltransferase 73E1 from Stevia rebaudiana (Stevia).